Reading from the N-terminus, the 152-residue chain is Large ribosomal subunit protein uL22 (152 aa).

Belongs to the universal ribosomal protein uL22 family. As to quaternary structure, part of the 50S ribosomal subunit.

In terms of biological role, this protein binds specifically to 23S rRNA. It makes multiple contacts with different domains of the 23S rRNA in the assembled 50S subunit and ribosome. Functionally, the globular domain of the protein is located near the polypeptide exit tunnel on the outside of the subunit, while an extended beta-hairpin is found that lines the wall of the exit tunnel in the center of the 70S ribosome. The protein is Large ribosomal subunit protein uL22 of Nitrosopumilus maritimus (strain SCM1).